A 461-amino-acid chain; its full sequence is Protein-serine O-palmitoleoyltransferase porcupine (461 aa).

At 1–17 (MATFSRQEFFQQLLQGC) the chain is on the cytoplasmic side. The helical transmembrane segment at 18 to 38 (LLPTAQQGLDQIWLLLAICLA) threads the bilayer. The Extracellular portion of the chain corresponds to 39-66 (CRLLWRLGLPSYLKHASTVAGGFFSLYH). Residues 67–87 (FFQLHMVWVVLLSLLCYLVLF) form a helical membrane-spanning segment. Residues 88–95 (LCRHSSHR) lie on the Cytoplasmic side of the membrane. Residues 96–116 (GVFLSVTILIYLLMGEMHMVD) traverse the membrane as a helical segment. At 117 to 152 (TVTWHKMRGAQMIVAMKAVSLGFDLDRGEVGTVPSP) the chain is on the extracellular side. Residues 153–173 (VEFMGYLYFVGTIVFGPWISF) traverse the membrane as a helical segment. Over 174–198 (HSYLQAVQGRPLSCRWLQKVARSLA) the chain is Cytoplasmic. A lipid anchor (S-palmitoyl cysteine) is attached at C187. A helical transmembrane segment spans residues 199 to 219 (LALLCLVLSTCVGPYLFPYFI). The Extracellular segment spans residues 220 to 252 (PLNGDRLLRNKKRKARGTMVRWLRAYESAVSFH). Residues 253-273 (FSNYFVGFLSEATATLAGAGF) traverse the membrane as a helical segment. The Cytoplasmic segment spans residues 274-337 (TEEKDHLEWD…SAVLVTYAAS (64 aa)). A helical transmembrane segment spans residues 338 to 358 (ALLHGFSFHLAAVLLSLAFIT). Residue H341 is part of the active site. At 359-396 (YVEHVLRKRLARILSACVLSKRCPPDCSHQHRLGLGVR) the chain is on the extracellular side. The chain crosses the membrane as a helical span at residues 397 to 417 (ALNLLFGALAIFHLAYLGSLF). Over 418-461 (DVDVDDTTEEQGYGMAYTVHKWSELSWASHWVTFGCWIFYRLIG) the chain is Cytoplasmic.

This sequence belongs to the membrane-bound acyltransferase family. Porcupine subfamily. Interacts with WNT1, WNT3, WNT3A, WNT4, WNT5A, WNT5B, WNT6, WNT7A and WNT7B. Isoform 1 is expressed in fetal brain, brain, amygdala, caudate nucleus, cerebellum, hippocampus, pituitary, thalamus, heart, skeletal muscle and testis. Isoform 4 is expressed in amygdala, corpus callosum, hippocampus, spinal cord, kidney, liver, lung, spleen, uterus, testis. Isoform 2 and isoform 3 are expressed in substantia negra, spinal cord, heart and lung.

Its subcellular location is the endoplasmic reticulum membrane. It carries out the reaction [Wnt protein]-L-serine + (9Z)-hexadecenoyl-CoA = [Wnt protein]-O-(9Z)-hexadecenoyl-L-serine + CoA. Protein-serine O-palmitoleoyltransferase that acts as a key regulator of the Wnt signaling pathway by mediating the attachment of palmitoleate, a 16-carbon monounsaturated fatty acid (C16:1(9Z)), to Wnt proteins. Serine palmitoleoylation of WNT proteins is required for efficient binding to frizzled receptors. The chain is Protein-serine O-palmitoleoyltransferase porcupine from Homo sapiens (Human).